A 295-amino-acid chain; its full sequence is Protoheme IX farnesyltransferase (295 aa).

The next 9 membrane-spanning stretches (helical) occupy residues 8-28, 35-55, 83-103, 107-127, 132-152, 162-182, 208-228, 229-249, and 263-283; these read ITKP…FFLA, GGLF…GCVF, GVTL…LWFG, LATA…SLYL, IYGT…GYCA, LTLL…IAIF, IFWY…GGYA, GYGY…MALR, and VFIF…IDFQ.

This sequence belongs to the UbiA prenyltransferase family. Protoheme IX farnesyltransferase subfamily.

The protein localises to the cell inner membrane. The catalysed reaction is heme b + (2E,6E)-farnesyl diphosphate + H2O = Fe(II)-heme o + diphosphate. The protein operates within porphyrin-containing compound metabolism; heme O biosynthesis; heme O from protoheme: step 1/1. In terms of biological role, converts heme B (protoheme IX) to heme O by substitution of the vinyl group on carbon 2 of heme B porphyrin ring with a hydroxyethyl farnesyl side group. The protein is Protoheme IX farnesyltransferase of Chromohalobacter salexigens (strain ATCC BAA-138 / DSM 3043 / CIP 106854 / NCIMB 13768 / 1H11).